A 245-amino-acid polypeptide reads, in one-letter code: Lytic switch protein BZLF1 (245 aa).

Positions Met-1–Ser-167 are transactivation. Thr-14 and Thr-159 each carry phosphothreonine. Residues Gly-145–Ser-167 form a disordered region. Positions Arg-157 to Lys-194 match the Bipartite nuclear localization signal motif. Phosphoserine is present on residues Ser-167, Ser-173, and Ser-186. Positions Lys-178 to His-195 are basic motif. Residues Lys-178–Asp-228 form the bZIP domain. Residues Leu-196–Asp-228 form a leucine-zipper region. Residues Ser-229 to Phe-245 form an accessory activation domain region.

This sequence belongs to the bZIP family. As to quaternary structure, homodimer. Interacts (via b-ZIP domain) with the DNA polymerase processivity factor BMRF1 (via N-terminus); this interaction may inhibit BZLF1-induced transcription of the BMRF1 promoter. Interacts with human UBN1, CRTC2 and RACK1. Interacts (via N-terminus) with human PAX5 (via N-terminus); this interaction inhibits BZLF1-mediated lytic viral reactivation. Interacts (via leucine-zipper domain) with host CEBPA; this interaction induces G1 host cell cycle arrest. Interacts (via C-terminus) with host TP53BP1 (via C-terminus); this interaction is involved in the activation of the viral lytic cycle. Interacts with host chromatin-remodeling ATPase INO80; this interaction participates to the activation of early lytic viral genes by BZLF1. Interacts with host regulator of chromatin SMARCA5/hSNF2H; this interaction participates to the activation of early lytic viral genes by BZLF1. Interacts with host PLSCR1/Phospholipid scramblase 1; this interaction negatively regulates the transcriptional regulatory activity of BZLF1 by preventing the formation of the BZLF1-CBP complex.

The protein localises to the host nucleus. Its function is as follows. Transcription factor that acts as a molecular switch to induce the transition from the latent to the lytic or productive phase of the virus cycle. Mediates the switch from the latent to the lytic cycle of infection in cells containing a highly methylated viral genome. Probably binds to silenced chromatin and recruits host chromatin-remodeling enzymes. Regulates this switch by binding to 2 types of ZEBRA response elements (ZREs): the CpG-free AP-1 like elements (latency) and the methylated CpG-containing elements (lytic replication). Activates preferentially the methylated forms of the viral lytic R (BRLF1) and Na (BRRF1) gene promoters, the latters being the first genes activated during Z-mediated reactivation in latently infected cells. BZLF1 and BRLF1 act together to trigger lytic replication. Also binds the lytic origin of replication, oriLyt. Induces G1 cell cycle arrest by stabilizing the host CCAAT/enhancer binding protein CEBPA. This function is important because the lytic cycle preferentially takes place in host cells arrested in G1. The protein is Lytic switch protein BZLF1 of Homo sapiens (Human).